Consider the following 807-residue polypeptide: DNA gyrase subunit B (807 aa).

Positions 429–543 (SELFIVEGDS…KGYLYIAQPP (115 aa)) constitute a Toprim domain. The Mg(2+) site is built by Glu435, Asp508, and Asp510.

This sequence belongs to the type II topoisomerase GyrB family. In terms of assembly, heterotetramer, composed of two GyrA and two GyrB chains. In the heterotetramer, GyrA contains the active site tyrosine that forms a transient covalent intermediate with DNA, while GyrB binds cofactors and catalyzes ATP hydrolysis. The cofactor is Mg(2+). Mn(2+) serves as cofactor. Ca(2+) is required as a cofactor.

Its subcellular location is the cytoplasm. The enzyme catalyses ATP-dependent breakage, passage and rejoining of double-stranded DNA.. A type II topoisomerase that negatively supercoils closed circular double-stranded (ds) DNA in an ATP-dependent manner to modulate DNA topology and maintain chromosomes in an underwound state. Negative supercoiling favors strand separation, and DNA replication, transcription, recombination and repair, all of which involve strand separation. Also able to catalyze the interconversion of other topological isomers of dsDNA rings, including catenanes and knotted rings. Type II topoisomerases break and join 2 DNA strands simultaneously in an ATP-dependent manner. The polypeptide is DNA gyrase subunit B (Rickettsia prowazekii (strain Madrid E)).